Consider the following 198-residue polypeptide: Transcription factor FapR (198 aa).

A MaoC-like domain is found at 102–167 (TRIARGHHLF…HGRTIVEVNS (66 aa)).

Belongs to the FapR family.

Its function is as follows. Transcriptional factor involved in regulation of membrane lipid biosynthesis by repressing genes involved in fatty acid and phospholipid metabolism. The sequence is that of Transcription factor FapR from Geobacillus kaustophilus (strain HTA426).